A 461-amino-acid chain; its full sequence is Cysteine--tRNA ligase (461 aa).

A Zn(2+)-binding site is contributed by cysteine 29. The short motif at methionine 31–histidine 41 is the 'HIGH' region element. Positions 213, 238, and 242 each coordinate Zn(2+). The 'KMSKS' region motif lies at lysine 270 to serine 274. Position 273 (lysine 273) interacts with ATP.

Belongs to the class-I aminoacyl-tRNA synthetase family. Monomer. Requires Zn(2+) as cofactor.

It is found in the cytoplasm. The catalysed reaction is tRNA(Cys) + L-cysteine + ATP = L-cysteinyl-tRNA(Cys) + AMP + diphosphate. The protein is Cysteine--tRNA ligase of Delftia acidovorans (strain DSM 14801 / SPH-1).